The following is a 374-amino-acid chain: MARDYYDILGVSRSADPDELKRSYRRLARKYHPDVNKEPGAEDKFKEINKAYETLSDPQMRGRYDQFGEAGVSSAAGAGYQDFGDFGGFADIFETFFSGFGGSPQSGRRRSGPARGEDLRFDLKLKFREAVFGGEQQIRISHLESCKTCEGTGAKPGTRPQTCSTCQGSGQVRRMTRTPLGNFTQVSVCPTCNGQGQVVTEKCDSCGGRGQNQVSKKLQIKIPAGVDTGTRLRVSNEGDAGQKGGPPGDLYVYLFVQEDSEFRRDGTNVLSEFKISYLQAILGAQLPVKTVDGEETITIPAGTQPGTVLTLENHGVPRLGNPVSRGDHLITVIIDIPNRISTEERELLVQLASIRAEQTGKGGIEGFLGGIFGR.

A J domain is found at 4 to 68 (DYYDILGVSR…QMRGRYDQFG (65 aa)). The segment at 133–215 (GGEQQIRISH…CGGRGQNQVS (83 aa)) adopts a CR-type zinc-finger fold. Positions 146, 149, 163, 166, 189, 192, 203, and 206 each coordinate Zn(2+). CXXCXGXG motif repeat units follow at residues 146-153 (CKTCEGTG), 163-170 (CSTCQGSG), 189-196 (CPTCNGQG), and 203-210 (CDSCGGRG).

The protein belongs to the DnaJ family. As to quaternary structure, homodimer. Zn(2+) serves as cofactor.

It is found in the cytoplasm. Participates actively in the response to hyperosmotic and heat shock by preventing the aggregation of stress-denatured proteins and by disaggregating proteins, also in an autonomous, DnaK-independent fashion. Unfolded proteins bind initially to DnaJ; upon interaction with the DnaJ-bound protein, DnaK hydrolyzes its bound ATP, resulting in the formation of a stable complex. GrpE releases ADP from DnaK; ATP binding to DnaK triggers the release of the substrate protein, thus completing the reaction cycle. Several rounds of ATP-dependent interactions between DnaJ, DnaK and GrpE are required for fully efficient folding. Also involved, together with DnaK and GrpE, in the DNA replication of plasmids through activation of initiation proteins. This chain is Chaperone protein DnaJ, found in Acaryochloris marina (strain MBIC 11017).